The primary structure comprises 504 residues: MLPSQAGAAAALGRGSALGGNLNRTPTGRPGGGGGTRGANGGRVPGNGAGLGQSRLEREAAAAAAPTAGALYSGSEGDSESGEEEELGAERRGLKRSLSEMELGVVVGGPEAAAAAAGGYGPVSGAVSGAKPGKKTRGRVKIKMEFIDNKLRRYTTFSKRKTGIMKKAYELSTLTGTQVLLLVASETGHVYTFATRKLQPMITSETGKALIQTCLNSPDSPPRSDPTTDQRMSATGFEEPDLTYQVSESDSSGETKDTLKPAFTVTNLPGTTSTIQTAPSTSTTMQVSSGPSFPITNYLAPVSASVSPSAVSSANGTVLKSTGSGPVSSGGLMQLPTSFTLMPGGAVAQQVPVQAIHVHQAPQQASPSRDSSTDLTQTSSSGTVTLPATIMTSSVPTTVGGHMMYPSPHAVMYAPTSGLADGSLTVLNAFSQAPSTMQVSHSQVQEPGGVPQVFLTAPSGTVQIPVSAVQLHQMAVIGQQAGSSSNLTELQVVNLDATHSTKSE.

Low complexity predominate over residues 1 to 28 (MLPSQAGAAAALGRGSALGGNLNRTPTG). The segment at 1–94 (MLPSQAGAAA…EELGAERRGL (94 aa)) is disordered. The span at 29–51 (RPGGGGGTRGANGGRVPGNGAGL) shows a compositional bias: gly residues. Residues 61–76 (AAAAAPTAGALYSGSE) show a composition bias toward low complexity. Phosphoserine occurs at positions 73, 75, 79, 81, and 99. Over residues 77–87 (GDSESGEEEEL) the composition is skewed to acidic residues. Residues 129 to 218 (GAKPGKKTRG…ALIQTCLNSP (90 aa)) mediate DNA binding. The 61-residue stretch at 137 to 197 (RGRVKIKMEF…GHVYTFATRK (61 aa)) folds into the MADS-box domain. Residues 164–218 (IMKKAYELSTLTGTQVLLLVASETGHVYTFATRKLQPMITSETGKALIQTCLNSP) form an involved in dimerization region. The tract at residues 215-288 (LNSPDSPPRS…PSTSTTMQVS (74 aa)) is disordered. Phosphoserine is present on residues Ser-220 and Ser-249. A compositionally biased stretch (polar residues) spans 264 to 288 (TVTNLPGTTSTIQTAPSTSTTMQVS). Residues Ser-273, Ser-303, Ser-305, Ser-312, and Ser-379 are each glycosylated (O-linked (GlcNAc) serine). Positions 359–381 (HQAPQQASPSRDSSTDLTQTSSS) are disordered. The span at 368-381 (SRDSSTDLTQTSSS) shows a compositional bias: low complexity. Phosphoserine; by dsDNA kinase is present on residues Ser-431 and Ser-442.

As to quaternary structure, binds DNA as a multimer, probably a dimer. Interacts with MRTFA, forming the SRF-MRTFA nuclear complex which binds the 5'-CArG-3' consensus motif (CArG box) on DNA via SRF. Forms a nuclear ternary complex with MRTFA and SCAI. Interacts with MRTFB. Interacts with MLLT7/FOXO4, NKX3A and SSRP1. Interacts with ARID2. Interacts with SRFBP1. Interacts with FOXK1. Interacts with LPXN. Interacts with OLFM2; the interaction promotes dissociation of SRF from the transcriptional repressor HEY2, facilitates binding of SRF to target genes and promotes smooth muscle differentiation. Interacts with NKX3-1. Interacts with KAT5. Interacts with PURB. Phosphorylated by PRKDC.

It is found in the nucleus. In terms of biological role, SRF is a transcription factor that binds to the serum response element (SRE), a short sequence of dyad symmetry located 300 bp to the 5' of the site of transcription initiation of some genes (such as FOS). Together with MRTFA transcription coactivator, controls expression of genes regulating the cytoskeleton during development, morphogenesis and cell migration. The SRF-MRTFA complex activity responds to Rho GTPase-induced changes in cellular globular actin (G-actin) concentration, thereby coupling cytoskeletal gene expression to cytoskeletal dynamics. Required for cardiac differentiation and maturation. In Mus musculus (Mouse), this protein is Serum response factor (Srf).